Reading from the N-terminus, the 230-residue chain is Transmembrane 4 L6 family member 20 (230 aa).

Over 1 to 11 (MTCCEGWTSCN) the chain is Lumenal. Residues 12–32 (GFSLLVLLLLGVTLNAIPLIL) traverse the membrane as a helical segment. The Cytoplasmic segment spans residues 33-44 (NFVDEDQFFENP). Residues 45–65 (ISCFEWWFPGIIGAGVMAIPA) traverse the membrane as a helical segment. Over 66-83 (TTMSLAARKRACCNNKTG) the chain is Lumenal. A helical transmembrane segment spans residues 84-104 (MFLSSLLNAITVIGAAYCLLV). The Cytoplasmic segment spans residues 105–185 (SIQALAEGPL…HFNSIENQHR (81 aa)). A helical transmembrane segment spans residues 186-206 (IIHFSVFLGLLLVGILEILFG). Residues 207–230 (LSQIIIGFFGCLCGGVSNGRSQIV) are Lumenal-facing.

It belongs to the L6 tetraspanin family. Glycosylated at Asn-132 in presence of ceramide which inverts the orientation of TM4SF20 in membranes exposing these residues to the endoplasmic reticulum lumen. In terms of processing, cleaved by signal peptidase at Ser-14 but the peptide does not act as a signal peptide. Cleavage is inhibited by ceramide which inverts the orientation of TM4SF20 in membranes exposing the N-terminus to the cytosol and not to the endoplasmic reticulum lumen.

The protein resides in the membrane. It localises to the endoplasmic reticulum membrane. Polytopic transmembrane protein. Inhibits regulated intramembrane proteolysis (RIP) of CREB3L1, inhibiting its activation and the induction of collagen synthesis. In response to ceramide, which alters TM4SF20 membrane topology, stimulates RIP activation of CREB3L1. Ceramide reverses the direction through which transmembrane helices are translocated into the endoplasmic reticulum membrane during translation of TM4SF20, this mechanism is called 'regulated alternative translocation' (RAT) and regulates the function of the transmembrane protein. The polypeptide is Transmembrane 4 L6 family member 20 (TM4SF20) (Bos taurus (Bovine)).